We begin with the raw amino-acid sequence, 152 residues long: MKISIISFGSSPREWLGLYKKEINKIKQFKYQIEFINLSEHSQENIELKKMLETKDILQKIPKNSSCYLFTERGKTVTSKEFSQLLNFPNICFIIGGSYGVDEKLIAKSRPDIGFLSFGKLTFAHKIFKLIVLEQIYRGFSIKFNRKYHHAD.

S-adenosyl-L-methionine is bound by residues leucine 69, glycine 96, and 118-123 (FGKLTF).

It belongs to the RNA methyltransferase RlmH family. Homodimer.

The protein localises to the cytoplasm. It catalyses the reaction pseudouridine(1915) in 23S rRNA + S-adenosyl-L-methionine = N(3)-methylpseudouridine(1915) in 23S rRNA + S-adenosyl-L-homocysteine + H(+). Its function is as follows. Specifically methylates the pseudouridine at position 1915 (m3Psi1915) in 23S rRNA. The chain is Ribosomal RNA large subunit methyltransferase H from Mesomycoplasma hyopneumoniae (strain 7448) (Mycoplasma hyopneumoniae).